Reading from the N-terminus, the 268-residue chain is Tryptophan synthase alpha chain (268 aa).

Residues glutamate 49 and aspartate 60 each act as proton acceptor in the active site.

It belongs to the TrpA family. As to quaternary structure, tetramer of two alpha and two beta chains.

It catalyses the reaction (1S,2R)-1-C-(indol-3-yl)glycerol 3-phosphate + L-serine = D-glyceraldehyde 3-phosphate + L-tryptophan + H2O. The protein operates within amino-acid biosynthesis; L-tryptophan biosynthesis; L-tryptophan from chorismate: step 5/5. The alpha subunit is responsible for the aldol cleavage of indoleglycerol phosphate to indole and glyceraldehyde 3-phosphate. This is Tryptophan synthase alpha chain from Salmonella paratyphi A (strain ATCC 9150 / SARB42).